A 18141-amino-acid polypeptide reads, in one-letter code: Titin (18141 aa).

Low complexity predominate over residues 1 to 31; it reads MQRQNPNPYQQQNQQHQQVQQFSSQEYSHSS. The segment at 1–69 is disordered; that stretch reads MQRQNPNPYQ…QHHGGSIGGA (69 aa). A compositionally biased stretch (basic and acidic residues) spans 32 to 47; sequence QEQHQEQRISRTEQHV. Residues 48 to 62 are compositionally biased toward low complexity; the sequence is QRSQVTTQRQVQQHH. Ig-like domains are found at residues 86–177, 255–343, 372–461, 471–559, 618–708, 751–842, 890–981, 1024–1115, 1158–1249, 1291–1381, 1424–1515, 1558–1643, 1691–1781, 1824–1917, 1958–2050, 2089–2180, and 2222–2313; these read PPVF…VYIQ, PQIS…AVLA, PAFV…AQLN, PQFV…ARLY, PQFI…AILS, PQFI…SSIR, PQFK…AQLT, PRFL…ATMI, PVFV…ACVR, PQFT…CSVR, PRFL…VELQ, PVFT…EAIT, PVFT…ASLI, PVFV…LNVT, PQFG…VNVT, PIFL…CNVR, and PHFT…TNLR. The interval 236–266 is disordered; that stretch reads EQDSQLSQELDRNQGPAQAPQISQKPRSSKL. C393 and C445 are disulfide-bonded. Intrachain disulfides connect C1312–C1365, C1446–C1499, and C1579–C1632. Residues C1846 and C1899 are joined by a disulfide bond. The cysteines at positions 2111 and 2164 are disulfide-linked. Basic and acidic residues predominate over residues 2338-2347; sequence STAPHQRQEP. Positions 2338–2357 are disordered; it reads STAPHQRQEPETPGTRQRPV. Ig-like domains are found at residues 2356–2449, 2488–2581, and 2622–2715; these read PVFT…MRVV, PIFT…MKVK, and PVFT…LKIE. The interval 2731 to 2750 is disordered; the sequence is PRIGELEAPKEGRPEAPEPT. Residues 2734-2746 show a composition bias toward basic and acidic residues; sequence GELEAPKEGRPEA. 9 consecutive Ig-like domains span residues 2754 to 2844, 2891 to 2983, 3029 to 3116, 3130 to 3221, 3263 to 3354, 3401 to 3494, 3539 to 3625, 3676 to 3767, and 3811 to 3901; these read PVFI…GTLK, PPVW…TTIF, PRFT…AEIS, PRFT…TTLN, PKFI…ASLK, PVFT…MKIQ, PEFI…ATVS, PKFT…AKVT, and PKFT…ATVS. A disulfide bridge links C2775 with C2828. C3152 and C3205 are oxidised to a cystine. Cystine bridges form between C3560/C3613, C3698/C3751, and C3832/C3885. Residues 3910–3944 form a TPR 1 repeat; that stretch reads LQNQVPRGMKRSDALTQMEATIKKYTSEVHLTEDD. Ig-like domains follow at residues 3954-4047 and 4092-4181; these read PRFV…IKVS and PVFV…LKVV. A disulfide bridge connects residues C3976 and C4029. The stretch at 4204–4229 forms a coiled coil; sequence AAYQKERQENELEKVFDERKQVLSEQ. 2 disordered regions span residues 4226–4254 and 4299–4336; these read LSEQ…DWQQ and SSQA…PSES. Residues 4309 to 4322 are compositionally biased toward polar residues; it reads YEENLQEKTSTTEV. 4 Ig-like domains span residues 4394–4482, 4497–4585, 4604–4692, and 4703–4791; these read PVFT…ANLV, PSFV…GDCI, PHIV…AQLK, and PTIT…AKLT. Residues 4403–4438 form a TPR 2 repeat; it reads CRVFENEQAKFEVEFEGEPNPTVKWYRESFPIQNSP. Cysteines 4625 and 4676 form a disulfide. 8 disordered regions span residues 4803-4891, 5318-5368, 5413-5648, 5667-5701, 5718-5748, 5775-5982, 6034-6350, and 6364-6393; these read RTID…DKGV, DELV…QPEP, RVIP…EVDA, IKKT…VPQK, KKTK…EVVQ, KEEE…QRLL, KRVK…MPVD, and EEEV…EASV. A compositionally biased stretch (low complexity) spans 4822–4841; sequence PESPHAFQPGQQPGQQFGQF. A compositionally biased stretch (basic residues) spans 4852 to 4863; it reads GRSRQKKPKVRS. 5 stretches are compositionally biased toward basic and acidic residues: residues 5344–5357, 5436–5447, 5541–5552, 5591–5621, and 5633–5645; these read QPQE…HDEL, RPKEAVKAEEIQ, QKPDEQKQELPK, IEEK…EKPE, and PKSE…HPDE. The stretch at 5575 to 5613 is one TPR 3 repeat; it reads PVLWERKKKKPQPQDVIEEKLDVAPTKTYEKAVDVLPDE. A compositionally biased stretch (acidic residues) spans 5681–5697; sequence EELFEEQPEEEISPEEE. Acidic residues-rich tracts occupy residues 5779–5792 and 5818–5860; these read IPTE…ETAE and DVEE…QDEI. A compositionally biased stretch (basic residues) spans 5865-5874; sequence RKVKKAKKPK. Positions 5883–5904 are enriched in acidic residues; that stretch reads EIEEDQPEEEVLQEEIIGEQEE. Over residues 5910–5920 the composition is skewed to basic residues; that stretch reads RKVKSIKKPKK. A compositionally biased stretch (basic and acidic residues) spans 5921-5971; sequence VVTEKTVDQTEQPEKPEESQAEEVKETVTEEPKKPKPAPEEAKVEQVEKIS. Residues 6034–6043 show a composition bias toward basic residues; sequence KRVKKKKPKT. Residues 6049-6079 show a composition bias toward acidic residues; the sequence is ESTEEPAEETEEFEEEATQPEEVQPVEEIPE. Composition is skewed to basic and acidic residues over residues 6081 to 6092, 6099 to 6133, 6141 to 6169, 6195 to 6209, 6217 to 6234, and 6259 to 6268; these read PQVKEVADERKT, RKEE…EVRL, IKPE…EEKR, EAEH…KPEE, KRGE…EKKW, and PIEEQQKPEK. The segment covering 6281–6290 has biased composition (acidic residues); that stretch reads PESEEEELEL. Over residues 6291-6306 the composition is skewed to basic and acidic residues; that stretch reads EPLKLPEDKKPKEPKA. Positions 6307–6318 are enriched in basic residues; the sequence is KKEKKKKPKLKK. Acidic residues-rich tracts occupy residues 6325–6349 and 6364–6373; these read EVSE…EMPV and EEEVVPTEET. Ig-like domains are found at residues 6536 to 6624, 6633 to 6728, 6741 to 6830, 6841 to 6929, 6942 to 7034, 7066 to 7151, and 7189 to 7279; these read PRIT…TNII, PQFT…NILS, PTVT…VVVS, PRFI…ATVN, PRFV…VKIQ, PKII…VAVT, and PSLL…FDIS. Cysteines 6557 and 6608 form a disulfide. A disulfide bridge connects residues C6964 and C7016. Residues 7621–7663 adopt a coiled-coil conformation; it reads KIQVQTKQIAQMNTKIKKHKKHKQQEQEVSETTIQCEQKETLA. 29 disordered regions span residues 7773–7793, 9414–9440, 9485–9510, 9556–9582, 9627–9652, 9698–9724, 9769–9796, 9838–9865, 9911–9937, 9982–10008, 10053–10080, 10125–10149, 10195–10220, 10266–10291, 10337–10364, 10408–10433, 10479–10504, 10550–10576, 10621–10648, 10692–10717, 10763–10788, 10834–10860, 10905–10932, 11047–11073, 11118–11143, 11189–11216, 11260–11286, 11679–11703, and 11767–11795; these read AKTA…VKAQ, EEDD…EEIQ, EEDD…PEEI, EEDD…EIQE, TAEE…PEEI, ENDK…PEEI, EELD…RGPD, and TEPE…LETP. Residues 7774-7783 show a composition bias toward basic and acidic residues; that stretch reads KTAESSKELP. Acidic residues-rich tracts occupy residues 9429–9440, 9500–9510, 9571–9582, 9642–9652, 9713–9724, 9784–9796, 9855–9865, 9926–9937, 9997–10008, 10068–10080, 10139–10149, 10210–10220, 10281–10291, 10352–10364, 10423–10433, 10494–10504, 10565–10576, 10636–10648, 10707–10717, 10778–10788, 10849–10860, 10920–10932, 11062–11073, 11133–11143, 11204–11216, and 11275–11286; these read VPYEEEKPEEIQ, VPYEEEKPEEI, and VPYE…EIQE. A compositionally biased stretch (basic residues) spans 11686–11699; the sequence is KPKKKTTKTRTFKK. Over residues 11780–11792 the composition is skewed to basic and acidic residues; that stretch reads PTKDKTPKQKKTL. Residues 11872–11905 form a TPR 4 repeat; that stretch reads KTVLQPYQRTEMELPQRARRDSSFKQPVKLTPMK. Disordered stretches follow at residues 12003–12201, 12451–12471, 12685–12767, 12943–12971, 13131–13154, 13325–13349, 13471–13492, 13554–13576, 13702–13792, 13891–13914, 13951–13994, 14073–14094, 14109–14322, 14354–14377, 14414–14448, 14533–14566, 14583–14720, and 14756–14789; these read FKHS…ADTK, TLQV…KKPE, TVDD…LPGP, IDHE…KEKS, IKKK…ETRP, QSFE…KPKK, EEYE…KSHN, EADK…PLKK, KVQK…KSPD, EEVQ…KAKK, MKRK…DEPK, TTVP…RTKK, EEEA…QVTT, EYEP…RKVK, PLDS…ETPV, EPEI…KVKK, KVDL…SELP, and VEES…KSKK. 6 stretches are compositionally biased toward basic and acidic residues: residues 12022-12035, 12044-12054, 12124-12134, 12183-12201, 12457-12471, and 12685-12709; these read ESDH…ELLH, EKIETPDESRK, MERTSDIREES, LNLR…ADTK, TEHE…KKPE, and TVDD…KISE. Residues 12731 to 12741 show a composition bias toward acidic residues; it reads HDEDLQTDEYS. Positions 12750 to 12760 are enriched in basic residues; sequence KSKKKSTKKQK. Positions 13141–13154 are enriched in basic and acidic residues; that stretch reads GPKEQVFEITETRP. Positions 13482–13492 are enriched in basic residues; it reads KKPKKKVKSHN. The stretch at 13566-13599 is one TPR 5 repeat; that stretch reads QPIKKEKPLKKKKDVEYPVSLEAFDHTVKVVSEP. Basic and acidic residues predominate over residues 13733 to 13747; it reads LVKEDLDQPIERALE. The span at 13771–13781 shows a compositional bias: basic residues; sequence PKPKKISKPKS. Composition is skewed to basic and acidic residues over residues 13893-13906 and 13975-13984; these read VQEK…EKKA and EDKPVEKISE. Basic and acidic residues predominate over residues 14221-14240; the sequence is TVEKPLEALHTDSDLEKPDV. Residues 14264-14274 are compositionally biased toward low complexity; the sequence is KISSEQPKQPS. A compositionally biased stretch (basic and acidic residues) spans 14282 to 14294; that stretch reads VTEHDLKPEEEKP. Positions 14542–14554 are enriched in basic and acidic residues; the sequence is IEEHPEQSKEKLA. A compositionally biased stretch (basic residues) spans 14555–14564; the sequence is PKPKKTVRKV. Basic and acidic residues predominate over residues 14583-14599; sequence KVDLEKYEKVEMPEKPV. Low complexity predominate over residues 14652 to 14662; that stretch reads ETTVDTTDIPE. A compositionally biased stretch (polar residues) spans 14664 to 14683; that stretch reads TPTQTAQPEDTATAQITPSA. Basic and acidic residues predominate over residues 14684 to 14697; it reads QEEKSTQDDTKDTI. Residues 14756–14771 show a composition bias toward acidic residues; that stretch reads VEESQPIVEEVEDEEP. One copy of the TPR 6 repeat lies at 14904-14936; it reads IPKTTDIGAIKDNGELSRNIEEAEEILKFKPHK. Disordered regions lie at residues 14956-15208, 15301-15329, 15425-15448, 15578-15597, 15697-15722, 15825-15876, 15951-15973, and 16181-16206; these read EKYI…VSVK, TRKK…IQPD, ISET…ETPK, IRVS…QFTV, EKPA…PKPE, EEPK…VEEP, ESQP…KAPI, and QEEE…KPLQ. Basic and acidic residues-rich tracts occupy residues 14967–14989, 15024–15046, 15069–15080, 15088–15097, 15109–15139, 15169–15179, 15189–15198, 15316–15325, 15425–15437, and 15578–15589; these read EKTP…DVKL, ELKQ…KDGE, QIEHPEIPEKVK, KPKDKSKSEP, PKEE…EIKL, IEDKAIDDEKK, QPKEQEIAKE, VTLKEPKEEQ, ISET…KPIE, and IRVSESEPKPEE. Residues 15703–15716 show a composition bias toward acidic residues; the sequence is IVEEEEPVVTEPIE. Positions 15951–15964 are enriched in basic and acidic residues; that stretch reads ESQPEAVEDKEVSL. A compositionally biased stretch (acidic residues) spans 16183–16193; the sequence is EEYEEGEDIEE. The region spanning 16409-16470 is the SH3 domain; the sequence is ENLNIMYSIC…PAQYLMEPEE (62 aa). Ig-like domains follow at residues 16501 to 16590, 16625 to 16719, 16728 to 16811, 16822 to 16916, 16919 to 17001, 17007 to 17091, 17097 to 17180, 17184 to 17270, and 17277 to 17363; these read PRFI…TELI, PTFS…ITLK, PQIL…ANLT, PPLF…VEVD, TFTK…STVE, PDFI…CELV, PEIV…AKLT, PLVD…TKLC, and PPVI…AEAS. An intrachain disulfide couples C16940 to C16989. Positions 17374–17467 constitute a Fibronectin type-III 1 domain; that stretch reads APGTPQPLEI…LSPPIRLVPK (94 aa). Ig-like domains lie at 17473-17558 and 17563-17653; these read PSVQ…CRLK and PVLE…CTVQ. A disulfide bridge connects residues C17494 and C17542. Fibronectin type-III domains are found at residues 17660-17755, 17760-17861, 17862-17958, and 17982-18078; these read RPQS…TKKF, PPRG…TPPS, PPQN…THAS, and PPTG…AMTA. A TPR 7 repeat occupies 17694-17728; sequence LEKCDVQNNVWMKVSDFNKDIKSYAVQKLSMNAQY. A disordered region spans residues 17741–17771; sequence SEPTESDPVTITKKFEKPSPPRGPTTVSGMN.

Belongs to the protein kinase superfamily. CAMK Ser/Thr protein kinase family. In terms of assembly, interacts with Msp300; this interaction mediates the recruitment of Msp300 to the Z-disks. As to expression, expressed in the mesoderm at stage 11, several hours before myoblast fusion, and persists in most muscle cells, somatic, visceral and pharyngeal muscles and their precursors, until the third instar. Isoform A: Expressed in the indirect flight muscle (at protein level).

The protein localises to the cytoplasm. It localises to the nucleus. It is found in the chromosome. The protein resides in the myofibril. Its subcellular location is the sarcomere. The protein localises to the z line. Its function is as follows. Key component in the assembly and functioning of adult and embryonic striated muscles and muscle tendons. By providing connections at the level of individual microfilaments, it contributes to the fine balance of forces between the two halves of the sarcomere. The size and extensibility of the cross-links are the main determinants of sarcomere extensibility properties of muscle. In non-muscle cells, seems to play a role in chromosome condensation and chromosome segregation during mitosis. Might link the lamina network to chromatin or nuclear actin, or both during interphase. The chain is Titin (sls) from Drosophila melanogaster (Fruit fly).